We begin with the raw amino-acid sequence, 230 residues long: ATP synthase subunit a (230 aa).

A run of 6 helical transmembrane segments spans residues 16 to 36, 73 to 93, 106 to 126, 142 to 162, 165 to 185, and 192 to 212; these read LVLF…WLSI, WVSA…LGLL, TYSI…YLAF, LIPF…IALG, LAAN…AIWT, and IASI…GVAC.

Belongs to the ATPase A chain family. In terms of assembly, F-type ATPases have 2 components, CF(1) - the catalytic core - and CF(0) - the membrane proton channel. CF(1) has five subunits: alpha(3), beta(3), gamma(1), delta(1), epsilon(1). CF(0) has three main subunits: a, b and c.

It localises to the mitochondrion inner membrane. Its function is as follows. Mitochondrial membrane ATP synthase (F(1)F(0) ATP synthase or Complex V) produces ATP from ADP in the presence of a proton gradient across the membrane which is generated by electron transport complexes of the respiratory chain. F-type ATPases consist of two structural domains, F(1) - containing the extramembraneous catalytic core and F(0) - containing the membrane proton channel, linked together by a central stalk and a peripheral stalk. During catalysis, ATP synthesis in the catalytic domain of F(1) is coupled via a rotary mechanism of the central stalk subunits to proton translocation. Key component of the proton channel; it may play a direct role in the translocation of protons across the membrane. This Patiria pectinifera (Starfish) protein is ATP synthase subunit a (ATP6).